A 141-amino-acid chain; its full sequence is Putative nickel-responsive regulator (141 aa).

Ni(2+)-binding residues include histidine 80, histidine 91, histidine 93, and cysteine 99.

The protein belongs to the transcriptional regulatory CopG/NikR family. Requires Ni(2+) as cofactor.

Functionally, transcriptional regulator. This chain is Putative nickel-responsive regulator, found in Methanococcus maripaludis (strain DSM 14266 / JCM 13030 / NBRC 101832 / S2 / LL).